The primary structure comprises 602 residues: Major facilitator superfamily multidrug transporter mfsB (602 aa).

A run of 12 helical transmembrane segments spans residues 29 to 49 (FVLA…FPYV), 67 to 87 (LYAG…GMFW), 98 to 118 (PVLI…GFAP), 128 to 148 (ALGG…AEIV), 160 to 180 (IMPF…GALA), 201 to 221 (FLLP…VGFL), 329 to 349 (IVAY…IPVF), 378 to 398 (FMLA…FPFV), 411 to 431 (VLLV…LPSI), 439 to 459 (LALI…AILL), 468 to 486 (VLGS…SRAL), and 505 to 525 (IIAW…SFWM). Residues 527–602 (ESEPRRDSEK…RSNPLAFAED (76 aa)) are disordered. A compositionally biased stretch (basic and acidic residues) spans 528 to 538 (SEPRRDSEKAG).

The protein belongs to the major facilitator superfamily.

Its subcellular location is the membrane. Its function is as follows. Major facilitator superfamily transporter that may be involved in A.fumigatus adaptation to azoles such as vorizonazole. This is Major facilitator superfamily multidrug transporter mfsB from Aspergillus fumigatus (strain ATCC MYA-4609 / CBS 101355 / FGSC A1100 / Af293) (Neosartorya fumigata).